A 94-amino-acid chain; its full sequence is Pyrimidine/purine nucleoside phosphorylase (94 aa).

Belongs to the nucleoside phosphorylase PpnP family.

The enzyme catalyses a purine D-ribonucleoside + phosphate = a purine nucleobase + alpha-D-ribose 1-phosphate. It carries out the reaction adenosine + phosphate = alpha-D-ribose 1-phosphate + adenine. The catalysed reaction is cytidine + phosphate = cytosine + alpha-D-ribose 1-phosphate. It catalyses the reaction guanosine + phosphate = alpha-D-ribose 1-phosphate + guanine. The enzyme catalyses inosine + phosphate = alpha-D-ribose 1-phosphate + hypoxanthine. It carries out the reaction thymidine + phosphate = 2-deoxy-alpha-D-ribose 1-phosphate + thymine. The catalysed reaction is uridine + phosphate = alpha-D-ribose 1-phosphate + uracil. It catalyses the reaction xanthosine + phosphate = alpha-D-ribose 1-phosphate + xanthine. Functionally, catalyzes the phosphorolysis of diverse nucleosides, yielding D-ribose 1-phosphate and the respective free bases. Can use uridine, adenosine, guanosine, cytidine, thymidine, inosine and xanthosine as substrates. Also catalyzes the reverse reactions. This Salmonella paratyphi C (strain RKS4594) protein is Pyrimidine/purine nucleoside phosphorylase.